The sequence spans 389 residues: Major outer membrane porin (389 aa).

Positions 1–23 (MKKLLKSALLSAAFAGSVGSLQA) are cleaved as a signal peptide.

It belongs to the chlamydial porin (CP) (TC 1.B.2) family. Part of a disulfide cross-linked outer membrane complex (COMC) composed of the major outer membrane porin (MOMP), the small cysteine-rich protein (OmcA) and the large cysteine-rich periplasmic protein (OmcB).

The protein localises to the cell outer membrane. In elementary bodies (EBs, the infectious stage, which is able to survive outside the host cell) provides the structural integrity of the outer envelope through disulfide cross-links with the small cysteine-rich protein and the large cysteine-rich periplasmic protein. It has been described in publications as the Sarkosyl-insoluble COMC (Chlamydia outer membrane complex), and serves as the functional equivalent of peptidoglycan. In terms of biological role, permits diffusion of specific solutes through the outer membrane. This is Major outer membrane porin (ompA) from Chlamydia pneumoniae (Chlamydophila pneumoniae).